The following is a 113-amino-acid chain: MALGWYELKLAKDGQFMFNLKAANSQVILTSELYRSRAAAENGIASVQKNGGDEKNFEFRENKNGEPYFILKAQNHQEIGRSEYYSSKAAAQNGVNSVMNNAATTVIKDITKS.

2 repeat units span residues 11-59 (AKDG…NFEF) and 62-110 (NKNG…IKDI).

The protein belongs to the UPF0339 family. Duplicated subfamily.

The sequence is that of UPF0339 protein MS1092 from Mannheimia succiniciproducens (strain KCTC 0769BP / MBEL55E).